The following is a 141-amino-acid chain: Putative pre-16S rRNA nuclease (141 aa).

This sequence belongs to the YqgF nuclease family.

It localises to the cytoplasm. Could be a nuclease involved in processing of the 5'-end of pre-16S rRNA. The sequence is that of Putative pre-16S rRNA nuclease from Coxiella burnetii (strain CbuK_Q154) (Coxiella burnetii (strain Q154)).